Reading from the N-terminus, the 445-residue chain is MSLWLEASMPDVSPDSATELWKTEPQDAGDQGGNTCILREEARMPQSTGVALGIGLESAEPTALLPRAETLPEPTELRPQKRKKGPAPKMLGNELCSVCGDKASGFHYNVLSCEGCKGFFRRSVIKGARYVCHSGGHCPMDTYMRRKCQECRLRKCRQAGMREECVLSEEQIRLKKLKRQEEEQAQATSVSPRVSSPPQVLPQLSPEQLGMIEKLVAAQQQCNRRSFSDRLRVTPWPIAPDPQSREARQQRFAHFTELAIVSVQEIVDFAKQLPGFLQLSREDQIALLKTSAIEVMLLETSRRYNPGSESITFLKDFSYNREDFAKAGLQVEFINPIFEFSRAMNELQLNDAEFALLIAISIFSADRPNVQDQLQVERLQHTYVEALHAYVSINHPHDPLMFPRMLMKLVSLRTLSSVHSEQVFALRLQDKKLPPLLSEIWDVHE.

Disordered regions lie at residues M1–N34 and A63–P86. A transactivation AF-1; required for ligand-independent transactivation function region spans residues M1–E94. A DNA-binding region (nuclear receptor) is located at residues N93–S168. 2 NR C4-type zinc fingers span residues C96–C116 and C132–C156. Phosphoserine is present on S191. Positions Q203–E445 are transactivation AF-2; required for ligand-dependent transactivation function; mediates interaction with CCAR2. Residues E207–E445 form the NR LBD domain.

The protein belongs to the nuclear hormone receptor family. NR1 subfamily. Heterodimer of NR1H3 and RXR (retinoic acid receptor). Interacts with CCAR2 (via N-terminus) in a ligand-independent manner. Interacts with SIRT1 and this interaction is inhibited by CCAR2. In terms of processing, ubiquitinated. Ubiquitination by UBR5 leads to its degradation: UBR5 specifically recognizes and binds ligand-bound NR1H3 when it is not associated with coactivators (NCOAs). In presence of NCOAs, the UBR5-degron is not accessible, preventing its ubiquitination and degradation.

The protein localises to the nucleus. The protein resides in the cytoplasm. Its function is as follows. Nuclear receptor that exhibits a ligand-dependent transcriptional activation activity. Interaction with retinoic acid receptor (RXR) shifts RXR from its role as a silent DNA-binding partner to an active ligand-binding subunit in mediating retinoid responses through target genes defined by LXRES. LXRES are DR4-type response elements characterized by direct repeats of two similar hexanuclotide half-sites spaced by four nucleotides. Plays an important role in the regulation of cholesterol homeostasis, regulating cholesterol uptake through MYLIP-dependent ubiquitination of LDLR, VLDLR and LRP8. Interplays functionally with RORA for the regulation of genes involved in liver metabolism. Induces LPCAT3-dependent phospholipid remodeling in endoplasmic reticulum (ER) membranes of hepatocytes, driving SREBF1 processing and lipogenesis. Via LPCAT3, triggers the incorporation of arachidonate into phosphatidylcholines of ER membranes, increasing membrane dynamics and enabling triacylglycerols transfer to nascent very low-density lipoprotein (VLDL) particles. Via LPCAT3 also counteracts lipid-induced ER stress response and inflammation, likely by modulating SRC kinase membrane compartmentalization and limiting the synthesis of lipid inflammatory mediators. The protein is Oxysterols receptor LXR-alpha (Nr1h3) of Mus musculus (Mouse).